We begin with the raw amino-acid sequence, 5141 residues long: SCO-spondin (5141 aa).

The first 17 residues, 1–17 (MLLPALLFGMLWAPANG), serve as a signal peptide directing secretion. One can recognise an EMI domain in the interval 18–102 (HWCEQIETVH…ACCPGWGGIH (85 aa)). 4 N-linked (GlcNAc...) asparagine glycosylation sites follow: asparagine 88, asparagine 130, asparagine 150, and asparagine 167. The VWFD 1 domain maps to 193 to 364 (ATCATWSGFH…RLPGYEPGCL (172 aa)). 3 disulfide bridges follow: cysteine 195–cysteine 325, cysteine 217–cysteine 363, and cysteine 239–cysteine 245. The TIL 1 domain occupies 472 to 527 (CPGGQLYSDCISSCPPSCSAVAQGEEGSCGKECVSGCECPTGLFWDGALCVPAAHC). The 174-residue stretch at 565–738 (AECAVGGDGH…FQVSGDGRCP (174 aa)) folds into the VWFD 2 domain. Disulfide bonds link cysteine 567/cysteine 700 and cysteine 591/cysteine 737. N-linked (GlcNAc...) asparagine glycosylation is found at asparagine 657 and asparagine 822. Positions 830 to 883 (CPGGQVYQECAPACGHYCGEPEDCKELGSCVAGCNCPPGLLWDLEGQCVPPSMC) constitute a TIL 2 domain. 3 N-linked (GlcNAc...) asparagine glycosylation sites follow: asparagine 895, asparagine 949, and asparagine 991. Positions 1017–1187 (GWCQASGAPH…HSWRLNPLCP (171 aa)) constitute a VWFD 3 domain. Disulfide bonds link cysteine 1019–cysteine 1151, cysteine 1041–cysteine 1186, and cysteine 1062–cysteine 1069. In terms of domain architecture, TIL 3 spans 1280-1336 (CEGGQVYEPCGSTCPPTCHDHHPELRWHCQAITCVEGCFCPEGTLLHGGTCVELTDC). N-linked (GlcNAc...) asparagine glycosylation is present at asparagine 1357. 4 consecutive LDL-receptor class A domains span residues 1380-1417 (GCAEGEALCRESGHCVPLEWLCDNQDDCGDGSDEEGCD), 1420-1456 (VCGEGQMSCQSGRCLPLSLICDGQDDCGDGTDEQGCL), 1456-1492 (LCPQGFLACADGRCLPPALLCDGHPDCLDAADEESCL), and 1496-1534 (SCTSGEVSCVDGPCIRTIQLCDGVWDCPDGADEGPVHCS). Disulfide bonds link cysteine 1381/cysteine 1394, cysteine 1388/cysteine 1407, cysteine 1401/cysteine 1416, cysteine 1421/cysteine 1433, cysteine 1428/cysteine 1446, cysteine 1440/cysteine 1455, cysteine 1457/cysteine 1469, cysteine 1464/cysteine 1482, cysteine 1476/cysteine 1491, cysteine 1497/cysteine 1509, cysteine 1504/cysteine 1522, and cysteine 1516/cysteine 1533. The tract at residues 1533–1567 (CSSPSLPTPPAGIGQNPSTSSPDTSPSPVGSASPA) is disordered. Residues 1549 to 1567 (PSTSSPDTSPSPVGSASPA) are compositionally biased toward low complexity. LDL-receptor class A domains follow at residues 1569–1605 (PCSLSEFQCNSGECTPRGWRCDREEDCTDGSDELDCG) and 1607–1646 (PCKLYQMPCAHGPHCLSPGQLCDGVAQCPDGSDEDPDVCE). Intrachain disulfides connect cysteine 1570/cysteine 1582, cysteine 1577/cysteine 1595, cysteine 1589/cysteine 1604, cysteine 1608/cysteine 1621, cysteine 1615/cysteine 1634, and cysteine 1628/cysteine 1645. Residues asparagine 1655 and asparagine 1668 are each glycosylated (N-linked (GlcNAc...) asparagine). The 41-residue stretch at 1660–1700 (PCPEFSCPNGTCIDFLLVCDGSPDCELADETEPSLDEQGCG) folds into the LDL-receptor class A 7 domain. Disulfide bonds link cysteine 1661/cysteine 1671, cysteine 1666/cysteine 1684, cysteine 1678/cysteine 1699, cysteine 1711/cysteine 1747, cysteine 1715/cysteine 1752, cysteine 1726/cysteine 1737, cysteine 1767/cysteine 1964, cysteine 1771/cysteine 1969, and cysteine 1781/cysteine 1791. TSP type-1 domains are found at residues 1699–1753 (CGTW…EACP) and 1755–1970 (DGEW…EPCE). N-linked (GlcNAc...) asparagine glycosylation occurs at asparagine 1725. Residue asparagine 1814 is glycosylated (N-linked (GlcNAc...) asparagine). EGF-like domains are found at residues 1829 to 1868 (CPLTCDDISGEAVCSPDRPCSSPGCWCPEGKVLGTEGRCV) and 1869 to 1895 (RPRQCPCLVDGIRYWPGQRIKMDCQLC). In terms of domain architecture, VWFC 1 spans 1970 to 2030 (EGCEQWGLTY…GMGESCCHCA (61 aa)). An N-linked (GlcNAc...) asparagine glycan is attached at asparagine 2035. 4 disulfide bridges follow: cysteine 2070-cysteine 2226, cysteine 2236-cysteine 2248, cysteine 2243-cysteine 2261, and cysteine 2255-cysteine 2270. One can recognise an F5/8 type C domain in the interval 2070-2226 (CYSPLGLAGL…IFLWVELLGC (157 aa)). The tract at residues 2087-2109 (PLEHSTRAAPVEAPTAGPGPRED) is disordered. N-linked (GlcNAc...) asparagine glycosylation is found at asparagine 2130 and asparagine 2148. The region spanning 2235 to 2271 (LCPGTRHRCANGDCALKGGPCDGAVDCEDGSDEEGCG) is the LDL-receptor class A 8 domain. The disordered stretch occupies residues 2262–2335 (EDGSDEEGCG…SPSASEGLLP (74 aa)). The span at 2276–2294 (STASRVHSTARTPALSPTQ) shows a compositional bias: polar residues. Over residues 2301–2314 (HPREGLADMEHQQP) the composition is skewed to basic and acidic residues. LDL-receptor class A domains are found at residues 2391-2427 (RCGPGQVPCDVLGCVEQEQLCDGREDCLDGSDEQHCA) and 2448-2484 (LCSPSQLSCGSGECLPLEHRCDLQVNCQDGSDEDDCV). 12 disulfides stabilise this stretch: cysteine 2392–cysteine 2404, cysteine 2399–cysteine 2417, cysteine 2411–cysteine 2426, cysteine 2449–cysteine 2461, cysteine 2456–cysteine 2474, cysteine 2468–cysteine 2483, cysteine 2486–cysteine 2522, cysteine 2497–cysteine 2501, cysteine 2532–cysteine 2537, cysteine 2552–cysteine 2589, cysteine 2556–cysteine 2594, and cysteine 2567–cysteine 2579. TSP type-1 domains follow at residues 2485–2538 (DCVL…QACP) and 2540–2595 (AGAW…QLCP). Residues 2618–2660 (PPCPPSCLDPEANRSCSGHCVEGCRCPPGLFLQDSHCLPLSEC) enclose the TIL 4 domain. 2 N-linked (GlcNAc...) asparagine glycosylation sites follow: asparagine 2630 and asparagine 2679. TSP type-1 domains lie at 2700 to 2754 (SCGW…TDCG), 2758 to 2813 (PGWT…SLCP), and 2815 to 2868 (PSAW…HPCT). Disulfide bonds link cysteine 2701/cysteine 2739, cysteine 2712/cysteine 2716, cysteine 2749/cysteine 2753, cysteine 2769/cysteine 2807, cysteine 2773/cysteine 2812, cysteine 2789/cysteine 2797, cysteine 2827/cysteine 2862, cysteine 2831/cysteine 2867, and cysteine 2842/cysteine 2852. N-linked (GlcNAc...) asparagine glycosylation is found at asparagine 2921 and asparagine 2951. 2 TSP type-1 domains span residues 2969–3024 (ACGW…RPCQ) and 3025–3068 (GPGA…QPCA). 3 cysteine pairs are disulfide-bonded: cysteine 2970-cysteine 3008, cysteine 2981-cysteine 2985, and cysteine 3018-cysteine 3023. N-linked (GlcNAc...) asparagine glycans are attached at residues asparagine 3046, asparagine 3101, asparagine 3148, and asparagine 3158. The TIL 5 domain occupies 3075–3127 (CPKDQQWLDCAQGPASCAHLSTPREANQTCHPGCYCLSGMLLLNNVCVPAQDC). 2 TSP type-1 domains span residues 3168–3235 (QPAW…PGCN) and 3237–3292 (AGVW…QPCP). 6 disulfide bridges follow: cysteine 3180–cysteine 3229, cysteine 3184–cysteine 3234, cysteine 3195–cysteine 3219, cysteine 3249–cysteine 3286, cysteine 3253–cysteine 3291, and cysteine 3264–cysteine 3276. A glycan (N-linked (GlcNAc...) asparagine) is linked at asparagine 3295. The region spanning 3300–3350 (EGAEYSPCGPPCPRSCDDLVHCMWHCQPGCYCPPGKVLSADGAICVQPHHC) is the TIL 6 domain. An N-linked (GlcNAc...) asparagine glycan is attached at asparagine 3384. 2 TSP type-1 domains span residues 3393–3455 (SGDW…TACP) and 3457–3512 (DGAW…TPCT). Intrachain disulfides connect cysteine 3405-cysteine 3448, cysteine 3409-cysteine 3454, cysteine 3420-cysteine 3432, cysteine 3469-cysteine 3504, cysteine 3472-cysteine 3511, and cysteine 3482-cysteine 3494. Residue asparagine 3506 is glycosylated (N-linked (GlcNAc...) asparagine). A TIL 7 domain is found at 3514 to 3570 (CGGGQDLLPCGQPCPHSCQDLSLGSTCQPGSSGCQSGCGCPPGQLSQDGLCVFPADC). N-linked (GlcNAc...) asparagine glycosylation is found at asparagine 3584 and asparagine 3611. Positions 3630-3678 (PGIWSSWGPWEKCSVPCGGGEQLRSRQCARPPCPGLAQQSRTCHIHVCR) constitute a TSP type-1 14 domain. 3 cysteine pairs are disulfide-bonded: cysteine 3642-cysteine 3672, cysteine 3646-cysteine 3677, and cysteine 3657-cysteine 3662. Asparagine 3787 is a glycosylation site (N-linked (GlcNAc...) asparagine). TSP type-1 domains lie at 3806–3862 (RGYF…PECP), 3876–3928 (AGGW…PSCT), 3942–3998 (NCFW…RACP), and 4000–4055 (PGGW…MPCE). 3 cysteine pairs are disulfide-bonded: cysteine 3818-cysteine 3856, cysteine 3822-cysteine 3861, and cysteine 3834-cysteine 3846. Residue asparagine 3910 is glycosylated (N-linked (GlcNAc...) asparagine). Cystine bridges form between cysteine 3943-cysteine 3979, cysteine 3954-cysteine 3958, cysteine 3992-cysteine 3997, cysteine 4012-cysteine 4049, cysteine 4016-cysteine 4054, and cysteine 4027-cysteine 4039. The TIL 8 domain occupies 4058–4113 (CPAGMEMVSCANRCPYSCSDLQEAVMCQEDQACQLGCRCSEGFLEQDGGCVPVGHC). Asparagine 4135 carries N-linked (GlcNAc...) asparagine glycosylation. TSP type-1 domains lie at 4155-4208 (HCAW…DPCP), 4249-4304 (PGGW…QLCL), 4306-4362 (LLEI…GPCQ), and 4364-4418 (DCMW…GNCS). 6 disulfide bridges follow: cysteine 4156–cysteine 4192, cysteine 4167–cysteine 4171, cysteine 4202–cysteine 4207, cysteine 4261–cysteine 4298, cysteine 4265–cysteine 4303, and cysteine 4276–cysteine 4288. The N-linked (GlcNAc...) asparagine glycan is linked to asparagine 4345. 3 disulfide bridges follow: cysteine 4365-cysteine 4402, cysteine 4376-cysteine 4378, and cysteine 4412-cysteine 4417. A glycan (N-linked (GlcNAc...) asparagine) is linked at asparagine 4416. Residues 4422–4477 (CLPPFEFQSCGSPCAGLCATHLSHQLCQDLPPCQPGCYCPMGLLEQDGGCILPEQC) enclose the TIL 9 domain. N-linked (GlcNAc...) asparagine glycosylation is present at asparagine 4557. In terms of domain architecture, TSP type-1 23 spans 4608 to 4659 (TCQWGPWGPWSPCQVPCSGGFKLRWREASDNSVGECRGPWAQTESCNMGSCP). Disulfide bonds link cysteine 4609/cysteine 4643, cysteine 4620/cysteine 4624, and cysteine 4653/cysteine 4658. The 47-residue stretch at 4673–4719 (DCANQCPRSCADLWEGVQCLQGPCSPGCRCPPGQLVQDGHCVPISSC) folds into the TIL 10 domain. Asparagine 4727, asparagine 4744, and asparagine 4749 each carry an N-linked (GlcNAc...) asparagine glycan. Residues 4759–4812 (CPVLGPWSPWSECSAVCGGGTMVRYRSCEEHPDSAPCQALDMEQRVECNLQTCP) form the TSP type-1 24 domain. Cystine bridges form between cysteine 4771/cysteine 4806, cysteine 4775/cysteine 4811, and cysteine 4786/cysteine 4795. In terms of domain architecture, TIL 11 spans 4814 to 4868 (CPPGQVLSTCATLCPSFCSHLWPGTICVREPCQLGCGCPGGQLLHSGTCIPPEAC). Asparagine 4899, asparagine 4942, and asparagine 4949 each carry an N-linked (GlcNAc...) asparagine glycan. A TIL 12 domain is found at 4920–4978 (CPPGEILQLGELRPCEKTCLEMNKTQAWSNCTEAQVPGCVCQLGHFRSHTGLCVPEDHC). Residues 4978–5036 (CECWHHGSPHLPGSEWQEACESCRCLHGKSVCTQHCPELSCAQGEVVVQEPGSCCPICQ) form the VWFC 2 domain. Disulfide bonds link cysteine 5047–cysteine 5095, cysteine 5061–cysteine 5112, cysteine 5071–cysteine 5128, and cysteine 5075–cysteine 5130. Positions 5047–5134 (CRHLTELRNL…IHNCHCSACQ (88 aa)) constitute a CTCK domain. The N-linked (GlcNAc...) asparagine glycan is linked to asparagine 5055.

Belongs to the thrombospondin family.

It is found in the secreted. It localises to the extracellular space. Functionally, involved in the modulation of neuronal aggregation. May be involved in developmental events during the formation of the central nervous system. The chain is SCO-spondin from Rattus norvegicus (Rat).